Consider the following 343-residue polypeptide: S-adenosylmethionine:tRNA ribosyltransferase-isomerase (343 aa).

This sequence belongs to the QueA family. As to quaternary structure, monomer.

Its subcellular location is the cytoplasm. It catalyses the reaction 7-aminomethyl-7-carbaguanosine(34) in tRNA + S-adenosyl-L-methionine = epoxyqueuosine(34) in tRNA + adenine + L-methionine + 2 H(+). The protein operates within tRNA modification; tRNA-queuosine biosynthesis. Functionally, transfers and isomerizes the ribose moiety from AdoMet to the 7-aminomethyl group of 7-deazaguanine (preQ1-tRNA) to give epoxyqueuosine (oQ-tRNA). This chain is S-adenosylmethionine:tRNA ribosyltransferase-isomerase, found in Geotalea uraniireducens (strain Rf4) (Geobacter uraniireducens).